The following is a 152-amino-acid chain: Superoxide dismutase [Cu-Zn] (152 aa).

Residues His-45, His-47, and His-62 each coordinate Cu cation. Cys-56 and Cys-145 are joined by a disulfide. Residues His-62, His-70, His-79, and Asp-82 each coordinate Zn(2+). His-119 lines the Cu cation pocket.

This sequence belongs to the Cu-Zn superoxide dismutase family. As to quaternary structure, homodimer. The cofactor is Cu cation. Zn(2+) is required as a cofactor.

It is found in the cytoplasm. It carries out the reaction 2 superoxide + 2 H(+) = H2O2 + O2. In terms of biological role, destroys radicals which are normally produced within the cells and which are toxic to biological systems. The protein is Superoxide dismutase [Cu-Zn] (SODCC) of Paulownia kawakamii (Dragon tree).